A 114-amino-acid chain; its full sequence is Photosystem II reaction center Psb28 protein (114 aa).

The protein belongs to the Psb28 family. In terms of assembly, part of the photosystem II complex.

Its subcellular location is the plastid. It is found in the chloroplast thylakoid membrane. This Gracilaria tenuistipitata var. liui (Red alga) protein is Photosystem II reaction center Psb28 protein.